Reading from the N-terminus, the 212-residue chain is Thymidylate kinase (212 aa).

7-14 (GGEGCGKT) lines the ATP pocket.

The protein belongs to the thymidylate kinase family.

It catalyses the reaction dTMP + ATP = dTDP + ADP. In terms of biological role, phosphorylation of dTMP to form dTDP in both de novo and salvage pathways of dTTP synthesis. The polypeptide is Thymidylate kinase (Gloeobacter violaceus (strain ATCC 29082 / PCC 7421)).